Reading from the N-terminus, the 507-residue chain is Pyruvate kinase (507 aa).

Arginine 50 serves as a coordination point for substrate. Residues asparagine 52, serine 54, aspartate 84, and threonine 85 each contribute to the K(+) site. 52–55 contributes to the ATP binding site; that stretch reads NFSH. ATP contacts are provided by arginine 91 and lysine 177. Glutamate 242 lines the Mg(2+) pocket. Glycine 265, aspartate 266, and threonine 298 together coordinate substrate. Aspartate 266 contributes to the Mg(2+) binding site.

The protein belongs to the pyruvate kinase family. In terms of assembly, homotetramer. Mg(2+) is required as a cofactor. K(+) serves as cofactor.

It catalyses the reaction pyruvate + ATP = phosphoenolpyruvate + ADP + H(+). It functions in the pathway carbohydrate degradation; glycolysis; pyruvate from D-glyceraldehyde 3-phosphate: step 5/5. In Dictyostelium discoideum (Social amoeba), this protein is Pyruvate kinase (pyk).